A 118-amino-acid polypeptide reads, in one-letter code: Aspartate 1-decarboxylase (118 aa).

Ser25 (schiff-base intermediate with substrate; via pyruvic acid) is an active-site residue. Ser25 is subject to Pyruvic acid (Ser). Thr57 is a substrate binding site. The active-site Proton donor is the Tyr58. Residue 73 to 75 participates in substrate binding; it reads GAA.

The protein belongs to the PanD family. Heterooctamer of four alpha and four beta subunits. Pyruvate is required as a cofactor. Is synthesized initially as an inactive proenzyme, which is activated by self-cleavage at a specific serine bond to produce a beta-subunit with a hydroxyl group at its C-terminus and an alpha-subunit with a pyruvoyl group at its N-terminus.

The protein localises to the cytoplasm. The enzyme catalyses L-aspartate + H(+) = beta-alanine + CO2. Its pathway is cofactor biosynthesis; (R)-pantothenate biosynthesis; beta-alanine from L-aspartate: step 1/1. Its function is as follows. Catalyzes the pyruvoyl-dependent decarboxylation of aspartate to produce beta-alanine. In Phenylobacterium zucineum (strain HLK1), this protein is Aspartate 1-decarboxylase.